Reading from the N-terminus, the 973-residue chain is 109 kDa U5 small nuclear ribonucleoprotein component GFL (973 aa).

The tract at residues 1–40 (MDGSLYGECGNYIGPEIESDRDSDDSVEDEDLQEPGGSNG) is disordered. Over residues 17–33 (IESDRDSDDSVEDEDLQ) the composition is skewed to acidic residues. One can recognise a tr-type G domain in the interval 122–408 (ALVRNVALVG…LGVTLSNSAY (287 aa)). The interval 131–138 (GHLQHGKT) is G1. GTP is bound at residue 131–138 (GHLQHGKT). The interval 175–179 (NISIK) is G2. Positions 201-204 (DTPG) are G3. Residues 201–205 (DTPGN) and 255–258 (NKVD) each bind GTP. A G4 region spans residues 255–258 (NKVD). The G5 stretch occupies residues 381–383 (YSQ).

The protein belongs to the TRAFAC class translation factor GTPase superfamily. Classic translation factor GTPase family. In terms of tissue distribution, expressed in flower buds, open flowers and siliques. Expressed at low levels in rosettes leaves, cauline leaves and stems.

Its subcellular location is the nucleus speckle. In terms of biological role, splicing factor involved in pre-mRNA splicing and component of the spliceosome. This Arabidopsis thaliana (Mouse-ear cress) protein is 109 kDa U5 small nuclear ribonucleoprotein component GFL.